The following is a 428-amino-acid chain: Enolase (428 aa).

Q164 provides a ligand contact to (2R)-2-phosphoglycerate. The active-site Proton donor is E208. Positions 245, 286, and 313 each coordinate Mg(2+). (2R)-2-phosphoglycerate is bound by residues K338, R367, S368, and K389. The Proton acceptor role is filled by K338.

The protein belongs to the enolase family. The cofactor is Mg(2+).

The protein localises to the cytoplasm. It localises to the secreted. It is found in the cell surface. It catalyses the reaction (2R)-2-phosphoglycerate = phosphoenolpyruvate + H2O. It functions in the pathway carbohydrate degradation; glycolysis; pyruvate from D-glyceraldehyde 3-phosphate: step 4/5. Its function is as follows. Catalyzes the reversible conversion of 2-phosphoglycerate (2-PG) into phosphoenolpyruvate (PEP). It is essential for the degradation of carbohydrates via glycolysis. The polypeptide is Enolase (Pyrococcus horikoshii (strain ATCC 700860 / DSM 12428 / JCM 9974 / NBRC 100139 / OT-3)).